We begin with the raw amino-acid sequence, 261 residues long: Indole-3-glycerol phosphate synthase (261 aa).

It belongs to the TrpC family.

It catalyses the reaction 1-(2-carboxyphenylamino)-1-deoxy-D-ribulose 5-phosphate + H(+) = (1S,2R)-1-C-(indol-3-yl)glycerol 3-phosphate + CO2 + H2O. The protein operates within amino-acid biosynthesis; L-tryptophan biosynthesis; L-tryptophan from chorismate: step 4/5. This chain is Indole-3-glycerol phosphate synthase, found in Campylobacter concisus (strain 13826).